A 186-amino-acid chain; its full sequence is MLVYVCLVVILIQLPFGAAGGAALGVIAKVSVDAALQQIDDVWKENTVRYWKCAVENRSTKTLYALGTTQESGSMSTIFADIPPQSTGVFVWEKSRGAATGAAGVVHYEYDNKILSIMASIPYDWNLYSAWANVHLSDHKKGFSDLYNGKNGARYPTRAGNWGNVDGTKFFLTDKSHAEFKVIFSG.

A signal peptide spans 1–21 (MLVYVCLVVILIQLPFGAAGG). The short motif at 158-160 (RAG) is the Cell attachment site element.

The protein belongs to the actinoporin family. HALT subfamily. In terms of assembly, octamer or nonamer in membranes. Monomer in the soluble state. In vitro, interacts with folate receptor alpha (of target organism). In terms of tissue distribution, expressed female germline during oogenesis.

Its subcellular location is the nematocyst. It is found in the secreted. The protein resides in the target cell membrane. Pore-forming protein that forms hydrophilic pores and causes cytolysis. Compared to equinatoxin-2 (AC P61914), it reveals lower cytolysis activity (5-12-fold difference, tested on erythrocytes), a larger pore size (probably 2-3 nm) and different affinity to membrane lipids (100-fold lower affinity to sphingomyelin). Binds to sulfatides. Shows cytolytic activity on HeLa cells, with a different potency than its paralogs (from most potent to less potent: HALT-4&gt;HALT-6~HALT-1&gt;HALT-3&gt;HALT-7&gt;HALT-2). Pore formation is a multi-step process that involves specific recognition of membrane lipid by a protein aromatic residues rich region, firm binding to the membrane (mainly driven by hydrophobic interactions) accompanied by the transfer of the N-terminal region to the lipid-water interface and finally pore formation after oligomerization of monomers. In vitro, binds to the folate receptor alpha (FOLR1), a GPI-anchored membrane protein that plays a major role in the uptake of folate/folic acid into cells via endocytosis, suggesting a possible involvement of this receptor in the mechanism of HALT-1-induced cell lysis. In vivo, does not cause visible paralysis in larvae of the blowfly Sarcophaga faculata, the most common arthropod prey of Hydra. This is Hydra actinoporin-like toxin 6 from Hydra vulgaris (Hydra).